The sequence spans 167 residues: MDLRNFGLSNFGLEPQLLSTIQDMLDFADDHDRAGRAPPEQPIRAYVRDAKAMAATPADVKEYPNSYVFIADMPGVKAAEIKVQVEDDNVLVVSGERTEREKDEKDGVKYLRMERRVGKFMRKFVLPENANVEAINAVYQDGVLQVTVEKLPPPEPKKPKTVEVKVA.

The sHSP domain occupies 49–167 (DAKAMAATPA…KPKTVEVKVA (119 aa)).

It belongs to the small heat shock protein (HSP20) family.

It is found in the cytoplasm. This is 18.8 kDa class II heat shock protein (SHSP-2) from Ipomoea nil (Japanese morning glory).